The chain runs to 199 residues: ATP synthase subunit a (199 aa).

5 consecutive transmembrane segments (helical) span residues 2 to 22, 53 to 73, 80 to 100, 141 to 161, and 169 to 189; these read NQVY…LFYF, VISV…YFTY, MVEF…LTFI, LTVN…GLEL, and WLSI…SYIF.

The protein belongs to the ATPase A chain family. In terms of assembly, F-type ATPases have 2 components, CF(1) - the catalytic core - and CF(0) - the membrane proton channel. CF(1) has five subunits: alpha(3), beta(3), gamma(1), delta(1), epsilon(1). CF(0) has three main subunits: a, b and c.

The protein localises to the mitochondrion inner membrane. Mitochondrial membrane ATP synthase (F(1)F(0) ATP synthase or Complex V) produces ATP from ADP in the presence of a proton gradient across the membrane which is generated by electron transport complexes of the respiratory chain. F-type ATPases consist of two structural domains, F(1) - containing the extramembraneous catalytic core and F(0) - containing the membrane proton channel, linked together by a central stalk and a peripheral stalk. During catalysis, ATP synthesis in the catalytic domain of F(1) is coupled via a rotary mechanism of the central stalk subunits to proton translocation. Key component of the proton channel; it may play a direct role in the translocation of protons across the membrane. This chain is ATP synthase subunit a (atp6), found in Caenorhabditis briggsae.